Reading from the N-terminus, the 595-residue chain is Sulfite reductase [NADPH] flavoprotein alpha-component (595 aa).

Residues 59 to 197 enclose the Flavodoxin-like domain; sequence ITVLSASQTG…KADIWRREIV (139 aa). FMN-binding positions include 65-70, 112-115, and 148-157; these read SQTGNA, STQG, and LGDSSYTYFA. One can recognise an FAD-binding FR-type domain in the interval 230 to 444; that stretch reads EEPFTAHLVV…IEHNDNFRLP (215 aa). Residues Thr-318, Phe-352, 382–385, 400–402, Tyr-406, and 415–418 contribute to the FAD site; these read RLYS, TVS, and GGAS. NADP(+)-binding positions include 515 to 516, 521 to 525, and Asp-557; these read SQ and KIYVQ. Position 595 (Tyr-595) interacts with FAD.

It belongs to the NADPH-dependent sulphite reductase flavoprotein subunit CysJ family. The protein in the N-terminal section; belongs to the flavodoxin family. In the C-terminal section; belongs to the flavoprotein pyridine nucleotide cytochrome reductase family. In terms of assembly, alpha(8)-beta(8). The alpha component is a flavoprotein, the beta component is a hemoprotein. The cofactor is FAD. Requires FMN as cofactor.

The catalysed reaction is hydrogen sulfide + 3 NADP(+) + 3 H2O = sulfite + 3 NADPH + 4 H(+). Its pathway is sulfur metabolism; hydrogen sulfide biosynthesis; hydrogen sulfide from sulfite (NADPH route): step 1/1. Its function is as follows. Component of the sulfite reductase complex that catalyzes the 6-electron reduction of sulfite to sulfide. This is one of several activities required for the biosynthesis of L-cysteine from sulfate. The flavoprotein component catalyzes the electron flow from NADPH -&gt; FAD -&gt; FMN to the hemoprotein component. The polypeptide is Sulfite reductase [NADPH] flavoprotein alpha-component (Baumannia cicadellinicola subsp. Homalodisca coagulata).